The primary structure comprises 431 residues: Enolase (431 aa).

Gln166 is a binding site for (2R)-2-phosphoglycerate. Glu208 (proton donor) is an active-site residue. The Mg(2+) site is built by Asp245, Glu288, and Asp315. Positions 340, 369, 370, and 391 each coordinate (2R)-2-phosphoglycerate. Catalysis depends on Lys340, which acts as the Proton acceptor.

Belongs to the enolase family. Mg(2+) is required as a cofactor.

The protein resides in the cytoplasm. It is found in the secreted. The protein localises to the cell surface. The catalysed reaction is (2R)-2-phosphoglycerate = phosphoenolpyruvate + H2O. The protein operates within carbohydrate degradation; glycolysis; pyruvate from D-glyceraldehyde 3-phosphate: step 4/5. Functionally, catalyzes the reversible conversion of 2-phosphoglycerate (2-PG) into phosphoenolpyruvate (PEP). It is essential for the degradation of carbohydrates via glycolysis. The protein is Enolase of Clostridium perfringens (strain ATCC 13124 / DSM 756 / JCM 1290 / NCIMB 6125 / NCTC 8237 / Type A).